Here is a 143-residue protein sequence, read N- to C-terminus: Large ribosomal subunit protein uL15 (143 aa).

The disordered stretch occupies residues Met1 to Gly52. Over residues Arg21 to Ser31 the composition is skewed to gly residues.

It belongs to the universal ribosomal protein uL15 family. As to quaternary structure, part of the 50S ribosomal subunit.

In terms of biological role, binds to the 23S rRNA. In Francisella tularensis subsp. novicida (strain U112), this protein is Large ribosomal subunit protein uL15.